The chain runs to 267 residues: NAD kinase (267 aa).

Aspartate 45 functions as the Proton acceptor in the catalytic mechanism. Residues 45-46 (DG), 121-122 (NE), arginine 147, aspartate 149, 160-165 (TAYSKS), and alanine 184 contribute to the NAD(+) site.

This sequence belongs to the NAD kinase family. A divalent metal cation serves as cofactor.

It localises to the cytoplasm. The enzyme catalyses NAD(+) + ATP = ADP + NADP(+) + H(+). Functionally, involved in the regulation of the intracellular balance of NAD and NADP, and is a key enzyme in the biosynthesis of NADP. Catalyzes specifically the phosphorylation on 2'-hydroxyl of the adenosine moiety of NAD to yield NADP. The chain is NAD kinase from Lactobacillus acidophilus (strain ATCC 700396 / NCK56 / N2 / NCFM).